Consider the following 117-residue polypeptide: Large ribosomal subunit protein bL19 (117 aa).

The protein belongs to the bacterial ribosomal protein bL19 family.

This protein is located at the 30S-50S ribosomal subunit interface and may play a role in the structure and function of the aminoacyl-tRNA binding site. In Shewanella frigidimarina (strain NCIMB 400), this protein is Large ribosomal subunit protein bL19.